We begin with the raw amino-acid sequence, 170 residues long: Cathelicidin antimicrobial peptide (170 aa).

An N-terminal signal peptide occupies residues 1 to 30 (MKTQMDGHSLGRWSLVLLLLGLVMPLAIVA). The propeptide at 31-131 (QVLSYKEAVL…DISCDKDNRR (101 aa)) is cathelin-like domain (CLD). 2 cysteine pairs are disulfide-bonded: Cys-86-Cys-97 and Cys-108-Cys-125. The active core stretch occupies residues 150 to 162 (FKRIVQRIKDFLR).

Belongs to the cathelicidin family. As to quaternary structure, monomer, homodimer or homotrimer (in vitro). Oligomerizes as tetra- or hexamer in solution (in vitro). In terms of processing, proteolytically cleaved by proteinase PRTN3 into antibacterial peptide LL-37. Proteolytically cleaved by cathepsin CTSG and neutrophil elastase ELANE. Resistant to proteolytic degradation in solution, and when bound to both zwitterionic (mimicking mammalian membranes) and negatively charged membranes (mimicking bacterial membranes). Post-translationally, after secretion onto the skin surface, the CAMP gene product is processed by a serine protease-dependent mechanism into multiple novel antimicrobial peptides distinct from and shorter than cathelicidin LL-37. These peptides show enhanced antimicrobial action, acquiring the ability to kill skin pathogens such as S.aureus, E.coli and C.albicans. These peptides have lost the ability to stimulate CXCL8/IL8 release from keratinocytes. The peptides act synergistically, killing bacteria at lower concentrations when present together, and maintain activity at increased salt condition.

The protein localises to the secreted. It is found in the vesicle. In terms of biological role, antimicrobial protein that is an integral component of the innate immune system. Binds to bacterial lipopolysaccharides (LPS). Acts via neutrophil N-formyl peptide receptors to enhance the release of CXCL2. Postsecretory processing generates multiple cathelicidin antimicrobial peptides with various lengths which act as a topical antimicrobial defense in sweat on skin. The unprocessed precursor form, cathelicidin antimicrobial peptide, inhibits the growth of Gram-negative E.coli and E.aerogenes with efficiencies comparable to that of the mature peptide LL-37 (in vitro). Functionally, antimicrobial peptide that is an integral component of the innate immune system. Binds to bacterial lipopolysaccharides (LPS). Causes membrane permeabilization by forming transmembrane pores (in vitro). Causes lysis of E.coli. Exhibits antimicrobial activity against Gram-negative bacteria such as P.aeruginosa, S.typhimurium, E.aerogenes, E.coli and P.syringae, Gram-positive bacteria such as L.monocytogenes, S.epidermidis, S.pyogenes and S.aureus, as well as vancomycin-resistant enterococci (in vitro). Exhibits antimicrobial activity against methicillin-resistant S.aureus, P.mirabilis, and C.albicans in low-salt media, but not in media containing 100 mM NaCl (in vitro). Forms chiral supramolecular assemblies with quinolone signal (PQS) molecules of P.aeruginosa, which may lead to interference of bacterial quorum signaling and perturbance of bacterial biofilm formation. May form supramolecular fiber-like assemblies on bacterial membranes. Induces cytokine and chemokine producation as well as TNF/TNFA and CSF2/GMCSF production in normal human keratinocytes. Exhibits hemolytic activity against red blood cells. Exhibits antimicrobial activity against E.coli and B.megaterium (in vitro). The protein is Cathelicidin antimicrobial peptide of Pongo pygmaeus (Bornean orangutan).